Here is a 155-residue protein sequence, read N- to C-terminus: Interleukin-2 (155 aa).

An N-terminal signal peptide occupies residues 1 to 20 (MYKMQLVACIALSLVLITNS). An O-linked (GalNAc...) threonine glycan is attached at T23. The cysteines at positions 77 and 125 are disulfide-linked.

Belongs to the IL-2 family.

It is found in the secreted. Functionally, cytokine produced by activated CD4-positive helper T-cells and to a lesser extend activated CD8-positive T-cells and natural killer (NK) cells that plays pivotal roles in the immune response and tolerance. Binds to a receptor complex composed of either the high-affinity trimeric IL-2R (IL2RA/CD25, IL2RB/CD122 and IL2RG/CD132) or the low-affinity dimeric IL-2R (IL2RB and IL2RG). Interaction with the receptor leads to oligomerization and conformation changes in the IL-2R subunits resulting in downstream signaling starting with phosphorylation of JAK1 and JAK3. In turn, JAK1 and JAK3 phosphorylate the receptor to form a docking site leading to the phosphorylation of several substrates including STAT5. This process leads to activation of several pathways including STAT, phosphoinositide-3-kinase/PI3K and mitogen-activated protein kinase/MAPK pathways. Functions as a T-cell growth factor and can increase NK-cell cytolytic activity as well. Promotes strong proliferation of activated B-cells and subsequently immunoglobulin production. Plays a pivotal role in regulating the adaptive immune system by controlling the survival and proliferation of regulatory T-cells, which are required for the maintenance of immune tolerance. Moreover, participates in the differentiation and homeostasis of effector T-cell subsets, including Th1, Th2, Th17 as well as memory CD8-positive T-cells. This Dasypus novemcinctus (Nine-banded armadillo) protein is Interleukin-2 (IL2).